We begin with the raw amino-acid sequence, 149 residues long: Deoxyuridine 5'-triphosphate nucleotidohydrolase (149 aa).

Substrate-binding positions include 68 to 70, Asn81, 85 to 87, and Met95; these read RSG and LID.

This sequence belongs to the dUTPase family. It depends on Mg(2+) as a cofactor.

The catalysed reaction is dUTP + H2O = dUMP + diphosphate + H(+). It functions in the pathway pyrimidine metabolism; dUMP biosynthesis; dUMP from dCTP (dUTP route): step 2/2. In terms of biological role, this enzyme is involved in nucleotide metabolism: it produces dUMP, the immediate precursor of thymidine nucleotides and it decreases the intracellular concentration of dUTP so that uracil cannot be incorporated into DNA. The sequence is that of Deoxyuridine 5'-triphosphate nucleotidohydrolase from Bordetella avium (strain 197N).